The following is a 419-amino-acid chain: Prolyl hydroxylase EGLN2 (419 aa).

Low complexity-rich tracts occupy residues 1 to 18 and 64 to 73; these read MDSP…PQLP and TTATATTTTA. Disordered regions lie at residues 1-89 and 108-181; these read MDSP…GELW and AAQG…REEV. The Bipartite nuclear localization signal signature appears at 89–134; that stretch reads WPLQSEGAAALVTKECQRLAAQGARPEAPKRKWAKDGGDAPSPSKR. The segment covering 115 to 126 has biased composition (basic and acidic residues); sequence EAPKRKWAKDGG. At serine 130 the chain carries Phosphoserine. Residues 154-174 show a composition bias toward low complexity; that stretch reads SGASNSSSSSSNTTSSSGEAS. The segment at 237-247 is beta(2)beta(3) 'finger-like' loop; sequence VSQRAIPPRSI. A Fe2OG dioxygenase domain is found at 290–388; sequence GRTKAMVACY…RYAITVWYFD (99 aa). The Fe cation site is built by histidine 309, aspartate 311, and histidine 370. Arginine 379 is a 2-oxoglutarate binding site.

As to quaternary structure, interacts with E3 ligase SIAH2. Interacts with LIMD1, WTIP and AJUBA. Fe(2+) serves as cofactor. It depends on L-ascorbate as a cofactor. Post-translationally, ubiquitinated by SIAH1 and/or SIAH2 in response to the unfolded protein response (UPR), leading to its degradation. In terms of tissue distribution, highly expressed in testis, expression was also detected in the heart brain, liver kidney and lung. Expression was lowest in spleen and skeletal muscle. Constitutively expressed during differentiation of C2C12 skeletal myocytes.

It localises to the nucleus. The enzyme catalyses L-prolyl-[protein] + 2-oxoglutarate + O2 = trans-4-hydroxy-L-prolyl-[protein] + succinate + CO2. It carries out the reaction L-prolyl-[hypoxia-inducible factor alpha subunit] + 2-oxoglutarate + O2 = trans-4-hydroxy-L-prolyl-[hypoxia-inducible factor alpha subunit] + succinate + CO2. Prolyl hydroxylase that mediates hydroxylation of proline residues in target proteins, such as ATF4, IKBKB, CEP192 and HIF1A. Target proteins are preferentially recognized via a LXXLAP motif. Cellular oxygen sensor that catalyzes, under normoxic conditions, the post-translational formation of 4-hydroxyproline in hypoxia-inducible factor (HIF) alpha proteins. Hydroxylates a specific proline found in each of the oxygen-dependent degradation (ODD) domains (N-terminal, NODD, and C-terminal, CODD) of HIF1A. Also hydroxylates HIF2A. Has a preference for the CODD site for both HIF1A and HIF2A. Hydroxylated HIFs are then targeted for proteasomal degradation via the von Hippel-Lindau ubiquitination complex. Under hypoxic conditions, the hydroxylation reaction is attenuated allowing HIFs to escape degradation resulting in their translocation to the nucleus, heterodimerization with HIF1B, and increased expression of hypoxy-inducible genes. EGLN2 is involved in regulating hypoxia tolerance and apoptosis in cardiac and skeletal muscle. Also regulates susceptibility to normoxic oxidative neuronal death. Links oxygen sensing to cell cycle and primary cilia formation by hydroxylating the critical centrosome component CEP192 which promotes its ubiquitination and subsequent proteasomal degradation. Hydroxylates IKBKB, mediating NF-kappa-B activation in hypoxic conditions. Also mediates hydroxylation of ATF4, leading to decreased protein stability of ATF4. The chain is Prolyl hydroxylase EGLN2 from Mus musculus (Mouse).